A 329-amino-acid chain; its full sequence is 4-hydroxythreonine-4-phosphate dehydrogenase (329 aa).

2 residues coordinate substrate: H136 and T137. The a divalent metal cation site is built by H166, H211, and H266. The substrate site is built by K274, N283, and R292.

It belongs to the PdxA family. Homodimer. The cofactor is Zn(2+). Mg(2+) serves as cofactor. It depends on Co(2+) as a cofactor.

The protein resides in the cytoplasm. It carries out the reaction 4-(phosphooxy)-L-threonine + NAD(+) = 3-amino-2-oxopropyl phosphate + CO2 + NADH. It participates in cofactor biosynthesis; pyridoxine 5'-phosphate biosynthesis; pyridoxine 5'-phosphate from D-erythrose 4-phosphate: step 4/5. Catalyzes the NAD(P)-dependent oxidation of 4-(phosphooxy)-L-threonine (HTP) into 2-amino-3-oxo-4-(phosphooxy)butyric acid which spontaneously decarboxylates to form 3-amino-2-oxopropyl phosphate (AHAP). This chain is 4-hydroxythreonine-4-phosphate dehydrogenase, found in Escherichia coli (strain K12 / MC4100 / BW2952).